Here is a 339-residue protein sequence, read N- to C-terminus: Ribosomal RNA small subunit methyltransferase H (339 aa).

S-adenosyl-L-methionine is bound by residues 52 to 54 (GGH), aspartate 71, phenylalanine 98, aspartate 130, and glutamine 137.

It belongs to the methyltransferase superfamily. RsmH family.

The protein resides in the cytoplasm. It carries out the reaction cytidine(1402) in 16S rRNA + S-adenosyl-L-methionine = N(4)-methylcytidine(1402) in 16S rRNA + S-adenosyl-L-homocysteine + H(+). In terms of biological role, specifically methylates the N4 position of cytidine in position 1402 (C1402) of 16S rRNA. The chain is Ribosomal RNA small subunit methyltransferase H from Corynebacterium diphtheriae (strain ATCC 700971 / NCTC 13129 / Biotype gravis).